Here is a 457-residue protein sequence, read N- to C-terminus: MNAIILISVLGILSMMSEFIGLKKLIYPIILISLIGILGYNACTFWNNPETHYGMLVHNNYSVAFGSLLITITLFWFILFRSSYSSGEFNQGDHYALILFSTVGGLVLVSFSNMSMLFLGVEILSIPLYILAGSRKKDLHSVESSIKYFILGSFATGIMLLGIALIYGATGSFDFATIEKTASADPLFFIGITLLSIAFAFKVSAVPFHFWVPDVYSGAPTFITAFMSTFVKVAAFGAFYLMLDSIFESVPTYLSHTLIGLSALTIVVGNIAASYQDNVKRMLAFSGVSQAGYMLMVFPILTISAKTSLFVYLAGYAIANLIAIYIVQVVEKSKGDARVENFSGLGKSNPFLAFVLSLSLISLAGIPPAAGFFGKFYLFTEVIHAGNIYLVLIAILGSLISVYYYFKTIIAMYSGEEVSTLTNPAFGFTSVILAIMSALVVLIGLFPDILLQIGMNI.

The next 14 helical transmembrane spans lie at 2-22 (NAII…FIGL), 25-45 (LIYP…ACTF), 60-80 (NYSV…FILF), 92-112 (GDHY…VSFS), 114-134 (MSML…LAGS), 149-169 (FILG…IYGA), 188-208 (FFIG…AVPF), 222-242 (FITA…FYLM), 253-273 (YLSH…NIAA), 283-303 (LAFS…ILTI), 310-330 (FVYL…VQVV), 353-373 (AFVL…AGFF), 382-402 (VIHA…LISV), and 431-451 (VILA…DILL).

Belongs to the complex I subunit 2 family. As to quaternary structure, NDH-1 is composed of 14 different subunits. Subunits NuoA, H, J, K, L, M, N constitute the membrane sector of the complex.

It localises to the cell inner membrane. It carries out the reaction a quinone + NADH + 5 H(+)(in) = a quinol + NAD(+) + 4 H(+)(out). Its function is as follows. NDH-1 shuttles electrons from NADH, via FMN and iron-sulfur (Fe-S) centers, to quinones in the respiratory chain. The immediate electron acceptor for the enzyme in this species is believed to be a menaquinone. Couples the redox reaction to proton translocation (for every two electrons transferred, four hydrogen ions are translocated across the cytoplasmic membrane), and thus conserves the redox energy in a proton gradient. The chain is NADH-quinone oxidoreductase subunit N from Cytophaga hutchinsonii (strain ATCC 33406 / DSM 1761 / CIP 103989 / NBRC 15051 / NCIMB 9469 / D465).